The sequence spans 94 residues: Integration host factor subunit beta (94 aa).

It belongs to the bacterial histone-like protein family. In terms of assembly, heterodimer of an alpha and a beta chain.

In terms of biological role, this protein is one of the two subunits of integration host factor, a specific DNA-binding protein that functions in genetic recombination as well as in transcriptional and translational control. This Serratia marcescens protein is Integration host factor subunit beta (ihfB).